A 135-amino-acid chain; its full sequence is MSDAVTIRTRKVISNPLLARKQFVVDVLHPNRANVSKDELREKLAEVYKAEKDAVSVFGFRTQFGGGKSVGFGLVYNSVAEAKKFEPTYRLVRYGLAEKVEKASRQQRKQKKNRDKKIFGTGKRLAKKVARRNAD.

Ser2 is subject to N-acetylserine. At Ser14 the chain carries Phosphoserine. A Glycyl lysine isopeptide (Lys-Gly) (interchain with G-Cter in ubiquitin) cross-link involves residue Lys21. Ser56 is modified (phosphoserine). The interval 102-135 is disordered; that stretch reads KASRQQRKQKKNRDKKIFGTGKRLAKKVARRNAD. Basic residues-rich tracts occupy residues 105–115 and 124–135; these read RQQRKQKKNRD and RLAKKVARRNAD.

This sequence belongs to the eukaryotic ribosomal protein eS24 family. As to quaternary structure, component of the small ribosomal subunit (SSU). Mature yeast ribosomes consist of a small (40S) and a large (60S) subunit. The 40S small subunit contains 1 molecule of ribosomal RNA (18S rRNA) and 33 different proteins (encoded by 57 genes). The large 60S subunit contains 3 rRNA molecules (25S, 5.8S and 5S rRNA) and 46 different proteins (encoded by 81 genes). In terms of processing, N-terminally acetylated by acetyltransferase NatA. Also partially acetylated by NatC.

The protein resides in the cytoplasm. Functionally, component of the ribosome, a large ribonucleoprotein complex responsible for the synthesis of proteins in the cell. The small ribosomal subunit (SSU) binds messenger RNAs (mRNAs) and translates the encoded message by selecting cognate aminoacyl-transfer RNA (tRNA) molecules. The large subunit (LSU) contains the ribosomal catalytic site termed the peptidyl transferase center (PTC), which catalyzes the formation of peptide bonds, thereby polymerizing the amino acids delivered by tRNAs into a polypeptide chain. The nascent polypeptides leave the ribosome through a tunnel in the LSU and interact with protein factors that function in enzymatic processing, targeting, and the membrane insertion of nascent chains at the exit of the ribosomal tunnel. This is Small ribosomal subunit protein eS24A from Saccharomyces cerevisiae (strain ATCC 204508 / S288c) (Baker's yeast).